Consider the following 32-residue polypeptide: Delta-conotoxin-like CnVIB (32 aa).

3 disulfide bridges follow: C3–C18, C10–C22, and C17–C27. 2 positions are modified to 4-hydroxyproline: P6 and P14.

Belongs to the conotoxin O1 superfamily. As to expression, expressed by the venom duct.

It is found in the secreted. Delta-conotoxins bind to site 6 of voltage-gated sodium channels (Nav) and inhibit the inactivation process. This toxin acts on Nav1.4/SCN4A and Nav1.6/SCN8A (EC(50)=2.3 uM). The polypeptide is Delta-conotoxin-like CnVIB (Conus consors (Singed cone)).